The sequence spans 32 residues: Trypsin inhibitor 4 (32 aa).

3 disulfide bridges follow: Cys-6–Cys-23, Cys-13–Cys-25, and Cys-19–Cys-31.

Belongs to the protease inhibitor I7 (squash-type serine protease inhibitor) family.

Its subcellular location is the secreted. Its function is as follows. Inhibits trypsin. The protein is Trypsin inhibitor 4 of Cucurbita maxima (Pumpkin).